The chain runs to 1374 residues: DNA-directed RNA polymerase subunit beta (1374 aa).

This sequence belongs to the RNA polymerase beta chain family. The RNAP catalytic core consists of 2 alpha, 1 beta, 1 beta' and 1 omega subunit. When a sigma factor is associated with the core the holoenzyme is formed, which can initiate transcription.

It carries out the reaction RNA(n) + a ribonucleoside 5'-triphosphate = RNA(n+1) + diphosphate. Its function is as follows. DNA-dependent RNA polymerase catalyzes the transcription of DNA into RNA using the four ribonucleoside triphosphates as substrates. The chain is DNA-directed RNA polymerase subunit beta from Rhodopseudomonas palustris (strain TIE-1).